Consider the following 523-residue polypeptide: UDP-glucuronosyltransferase 3A1 (523 aa).

An N-terminal signal peptide occupies residues 1–22; the sequence is MVGQRVLLLVAFLLSGVLLSEA. Residues 23–483 lie on the Extracellular side of the membrane; it reads AKILTISTLG…YAFQQPWHEQ (461 aa). Asn-52 carries an N-linked (GlcNAc...) asparagine glycan. A helical membrane pass occupies residues 484 to 504; it reads YLIDVFVFLLGLTLGTMWLCG. Over 505-523 the chain is Cytoplasmic; it reads KLLGVVARWLRGARKVKKT.

Belongs to the UDP-glycosyltransferase family.

The protein localises to the membrane. The catalysed reaction is glucuronate acceptor + UDP-alpha-D-glucuronate = acceptor beta-D-glucuronoside + UDP + H(+). UDP-glucuronosyltransferases catalyze phase II biotransformation reactions in which lipophilic substrates are conjugated with glucuronic acid to increase water solubility and enhance excretion. They are of major importance in the conjugation and subsequent elimination of potentially toxic xenobiotics and endogenous compounds. The chain is UDP-glucuronosyltransferase 3A1 (UGT3A1) from Homo sapiens (Human).